A 135-amino-acid chain; its full sequence is Large ribosomal subunit protein uL16c (135 aa).

This sequence belongs to the universal ribosomal protein uL16 family. Part of the 50S ribosomal subunit.

The protein localises to the plastid. It is found in the chloroplast. This is Large ribosomal subunit protein uL16c from Platanus occidentalis (Sycamore).